The sequence spans 546 residues: Chaperonin GroEL (546 aa).

ATP is bound by residues 30-33, K51, 87-91, G415, and D496; these read TLGP and DGTTT. The segment at 526-546 is disordered; the sequence is PEPKSAPAGGMGGMGGMDGMM. Over residues 534–546 the composition is skewed to gly residues; that stretch reads GGMGGMGGMDGMM.

It belongs to the chaperonin (HSP60) family. Forms a cylinder of 14 subunits composed of two heptameric rings stacked back-to-back. Interacts with the co-chaperonin GroES.

Its subcellular location is the cytoplasm. The catalysed reaction is ATP + H2O + a folded polypeptide = ADP + phosphate + an unfolded polypeptide.. Together with its co-chaperonin GroES, plays an essential role in assisting protein folding. The GroEL-GroES system forms a nano-cage that allows encapsulation of the non-native substrate proteins and provides a physical environment optimized to promote and accelerate protein folding. This is Chaperonin GroEL from Rhodopseudomonas palustris.